A 776-amino-acid chain; its full sequence is Protein translocase subunit SecA 2 (776 aa).

ATP is bound by residues Gln-80, Gly-98 to Thr-102, and Asp-486.

This sequence belongs to the SecA family. In terms of assembly, monomer and homodimer. Part of the essential Sec protein translocation apparatus which comprises SecA, SecYEG and auxiliary proteins SecDF. Other proteins may also be involved.

Its subcellular location is the cell membrane. It is found in the cytoplasm. The enzyme catalyses ATP + H2O + cellular proteinSide 1 = ADP + phosphate + cellular proteinSide 2.. Functionally, part of the Sec protein translocase complex. Interacts with the SecYEG preprotein conducting channel. Has a central role in coupling the hydrolysis of ATP to the transfer of proteins into and across the cell membrane, serving as an ATP-driven molecular motor driving the stepwise translocation of polypeptide chains across the membrane. This chain is Protein translocase subunit SecA 2, found in Listeria monocytogenes serovar 1/2a (strain ATCC BAA-679 / EGD-e).